The following is a 183-amino-acid chain: MSKRDNLYLVGLMGAGKTTVGRLLAKHYGCTFYDSDHEIEARTGVKIPVIFEIEGEAGFRRREEAVIAELTTLSGIVLATGGGAVLSPANREHLRTNGLVIYLRGSPEQLCERTRNDRNRPLLQTGNPLAKLRELYQQRDPIYRELADVTVDTARQSVAGMTRVLYGKLDLLKGEATSFDPAG.

14-19 (GAGKTT) provides a ligand contact to ATP. A Mg(2+)-binding site is contributed by T18. Substrate-binding residues include D36, R60, and G82. ATP is bound at residue R120. Residue R139 coordinates substrate. Q156 contacts ATP.

It belongs to the shikimate kinase family. As to quaternary structure, monomer. Mg(2+) is required as a cofactor.

The protein resides in the cytoplasm. It carries out the reaction shikimate + ATP = 3-phosphoshikimate + ADP + H(+). Its pathway is metabolic intermediate biosynthesis; chorismate biosynthesis; chorismate from D-erythrose 4-phosphate and phosphoenolpyruvate: step 5/7. Catalyzes the specific phosphorylation of the 3-hydroxyl group of shikimic acid using ATP as a cosubstrate. This chain is Shikimate kinase, found in Thiobacillus denitrificans (strain ATCC 25259 / T1).